A 486-amino-acid polypeptide reads, in one-letter code: MEKLQILTERQQTELNHAIIQYLQPLCQQDNHVLLDQLSKLLNIDQSTQESNNVEKVDNYLEKRWSTVLRLQKKIIDLENEISNLNNIINSTNSDNNGIILSKDKINWIPKGAVKQSYQCENIVTTVKLHPNLPLVLNGCNDGNLYIWNISNDDNTIPEKMIKAHTRAINKICFTYKKPYYLATCSSDLTIKIWDEKFNHIRTLNGHEHTVSSIQFSPVDNSILYSVSRDKNIRVWDIFQGISLKSFVGHSEWCRDLDIISSDTYGDFVLTCSNDQSARLSHANSGAGVAMIVGHSHVVETVKFLPSLQANKILDEYITKNTEQFPTIPLELLKDKTYNQLGFKYCITASRDNTIKLWLIPPPTIAPHRPPLPSKYNNSQSWLIAELKGHSSWVKSLCVHPNGKFIISGSDDKTIKFWDLSGLLETGYVNVVKTIIGHDGFINDIDFARLKEASDVSEEDLLKQVEKRMRCLFISGSADNSIKLWN.

The stretch at 66 to 99 (STVLRLQKKIIDLENEISNLNNIINSTNSDNNGI) forms a coiled coil. WD repeat units lie at residues 119-158 (QCENIVTTVKLHPNLPLVLNGCNDGNLYIWNISNDDNTIP), 164-205 (AHTR…RTLN), 206-246 (GHEH…SLKS), 249-291 (GHSE…GVAM), 294-328 (GHSHVVETVKFLPSLQANKILDEYITKNTEQFPTI), 329-368 (PLELLKDKTYNQLGFKYCITASRDNTIKLWLIPPPTIAPH), 389-428 (GHSSWVKSLCVHPNGKFIISGSDDKTIKFWDLSGLLETGY), and 437-483 (GHDG…NSIK).

This sequence belongs to the WD repeat LIS1/nudF family. Self-associates. Interacts with NDL1 and dynein.

It is found in the cytoplasm. The protein localises to the cytoskeleton. The protein resides in the spindle pole. Its function is as follows. Positively regulates the activity of the minus-end directed microtubule motor protein dynein. Plays a central role in positioning the mitotic spindle at the bud neck during cell division. Targets cytoplasmic dynein to microtubule plus ends, thereby promoting dynein-mediated microtubule sliding along the bud cortex and consequently the movement of the mitotic spindle to the bud neck. In Candida albicans (strain SC5314 / ATCC MYA-2876) (Yeast), this protein is Nuclear distribution protein PAC1.